A 393-amino-acid chain; its full sequence is Carbamoyl phosphate synthase small chain (393 aa).

Positions 1 to 194 (MSKDTTTYQG…TYVIEAEGEE (194 aa)) are CPSase. L-glutamine is bound by residues serine 61, glycine 245, and glycine 247. The Glutamine amidotransferase type-1 domain occupies 195–390 (RHTVVAYDLG…VELMDADAQK (196 aa)). Cysteine 273 acts as the Nucleophile in catalysis. Residues phenylalanine 274, glutamine 277, asparagine 315, glycine 317, and phenylalanine 318 each coordinate L-glutamine. Active-site residues include histidine 363 and glutamate 365.

This sequence belongs to the CarA family. In terms of assembly, composed of two chains; the small (or glutamine) chain promotes the hydrolysis of glutamine to ammonia, which is used by the large (or ammonia) chain to synthesize carbamoyl phosphate. Tetramer of heterodimers (alpha,beta)4.

It catalyses the reaction hydrogencarbonate + L-glutamine + 2 ATP + H2O = carbamoyl phosphate + L-glutamate + 2 ADP + phosphate + 2 H(+). It carries out the reaction L-glutamine + H2O = L-glutamate + NH4(+). The protein operates within amino-acid biosynthesis; L-arginine biosynthesis; carbamoyl phosphate from bicarbonate: step 1/1. Its pathway is pyrimidine metabolism; UMP biosynthesis via de novo pathway; (S)-dihydroorotate from bicarbonate: step 1/3. Functionally, small subunit of the glutamine-dependent carbamoyl phosphate synthetase (CPSase). CPSase catalyzes the formation of carbamoyl phosphate from the ammonia moiety of glutamine, carbonate, and phosphate donated by ATP, constituting the first step of 2 biosynthetic pathways, one leading to arginine and/or urea and the other to pyrimidine nucleotides. The small subunit (glutamine amidotransferase) binds and cleaves glutamine to supply the large subunit with the substrate ammonia. This is Carbamoyl phosphate synthase small chain from Corynebacterium glutamicum (strain ATCC 13032 / DSM 20300 / JCM 1318 / BCRC 11384 / CCUG 27702 / LMG 3730 / NBRC 12168 / NCIMB 10025 / NRRL B-2784 / 534).